Reading from the N-terminus, the 217-residue chain is Vesicle transport through interaction with t-SNAREs homolog 1A (217 aa).

Residues 1–192 (MSSDFEGYEQ…GMLRRIIQNR (192 aa)) are Cytoplasmic-facing. Coiled coils occupy residues 31-92 (PDEK…KRSR) and 112-178 (ENQR…GKSS). Residues 193-213 (ILLVILGIIVVITILMAITFS) form a helical membrane-spanning segment. Over 214-217 (VRRH) the chain is Extracellular.

It belongs to the VTI1 family. As to quaternary structure, interacts with distinct SNARE complexes that contain either STX5 or STX6. Interacts with NAPA and, to a lesser extent, with NAPG. Identified in a complex containing STX6, STX12, VAMP4 and VTI1A.

The protein localises to the cytoplasmic vesicle. The protein resides in the golgi apparatus membrane. Functionally, V-SNARE that mediates vesicle transport pathways through interactions with t-SNAREs on the target membrane. These interactions are proposed to mediate aspects of the specificity of vesicle trafficking and to promote fusion of the lipid bilayers. Involved in vesicular transport from the late endosomes to the trans-Golgi network. Along with VAMP7, involved in an non-conventional RAB1-dependent traffic route to the cell surface used by KCNIP1 and KCND2. May be involved in increased cytokine secretion associated with cellular senescence. This Homo sapiens (Human) protein is Vesicle transport through interaction with t-SNAREs homolog 1A (VTI1A).